The following is a 147-amino-acid chain: Large ribosomal subunit protein uL13 (147 aa).

Residues 128–147 (DQHPHGAQQPQPFEITQVAQ) are disordered.

The protein belongs to the universal ribosomal protein uL13 family. In terms of assembly, part of the 50S ribosomal subunit.

This protein is one of the early assembly proteins of the 50S ribosomal subunit, although it is not seen to bind rRNA by itself. It is important during the early stages of 50S assembly. This is Large ribosomal subunit protein uL13 from Streptomyces coelicolor (strain ATCC BAA-471 / A3(2) / M145).